The chain runs to 231 residues: Octanoyl-[acyl-carrier-protein]:protein N-octanoyltransferase LIPT2, mitochondrial (231 aa).

Residues Met1–Gln31 constitute a mitochondrion transit peptide. The region spanning Gly41–Leu224 is the BPL/LPL catalytic domain. Residues Arg85–His92, Ala154–Gly156, and Gly167–Ala169 contribute to the substrate site. Cys185 acts as the Acyl-thioester intermediate in catalysis.

It belongs to the LipB family.

Its subcellular location is the mitochondrion. It carries out the reaction octanoyl-[ACP] + L-lysyl-[protein] = N(6)-octanoyl-L-lysyl-[protein] + holo-[ACP] + H(+). The protein operates within protein modification; protein lipoylation via endogenous pathway; protein N(6)-(lipoyl)lysine from octanoyl-[acyl-carrier-protein]: step 1/2. Catalyzes the transfer of endogenously produced octanoic acid from octanoyl-acyl-carrier-protein (octanoyl-ACP) onto the lipoyl domains of lipoate-dependent enzymes such as the protein H of the glycine cleavage system (GCSH). Lipoyl-ACP can also act as a substrate although octanoyl-ACP is likely to be the physiological substrate. This chain is Octanoyl-[acyl-carrier-protein]:protein N-octanoyltransferase LIPT2, mitochondrial, found in Homo sapiens (Human).